The sequence spans 461 residues: Asparagine--tRNA ligase (461 aa).

It belongs to the class-II aminoacyl-tRNA synthetase family. Homodimer.

It localises to the cytoplasm. The enzyme catalyses tRNA(Asn) + L-asparagine + ATP = L-asparaginyl-tRNA(Asn) + AMP + diphosphate + H(+). The protein is Asparagine--tRNA ligase of Geobacter metallireducens (strain ATCC 53774 / DSM 7210 / GS-15).